The sequence spans 351 residues: Dihydroorotate dehydrogenase (quinone) (351 aa).

FMN contacts are provided by residues 61–65 (AGLDK) and threonine 85. Lysine 65 lines the substrate pocket. Residue 110–114 (NRMGF) participates in substrate binding. Positions 139 and 172 each coordinate FMN. Substrate is bound at residue asparagine 172. The active-site Nucleophile is the serine 175. Asparagine 177 contributes to the substrate binding site. Lysine 217 and threonine 245 together coordinate FMN. 246–247 (NT) contributes to the substrate binding site. Residues glycine 268, glycine 297, and 318 to 319 (YS) contribute to the FMN site.

The protein belongs to the dihydroorotate dehydrogenase family. Type 2 subfamily. Monomer. FMN is required as a cofactor.

It is found in the cell membrane. It catalyses the reaction (S)-dihydroorotate + a quinone = orotate + a quinol. The protein operates within pyrimidine metabolism; UMP biosynthesis via de novo pathway; orotate from (S)-dihydroorotate (quinone route): step 1/1. Functionally, catalyzes the conversion of dihydroorotate to orotate with quinone as electron acceptor. In Stenotrophomonas maltophilia (strain R551-3), this protein is Dihydroorotate dehydrogenase (quinone).